We begin with the raw amino-acid sequence, 660 residues long: Probable serine/threonine-protein kinase CE0033 (660 aa).

The region spanning 9-278 (YELGASIGSG…AEMAADLELL (270 aa)) is the Protein kinase domain. ATP is bound by residues 15–23 (IGSGGMSEV) and lysine 38. Catalysis depends on aspartate 136, which acts as the Proton acceptor. Residues 288-319 (RAHVEKPDEPETVVVPQRLSTPPPPPTPAMPA) are disordered. PASTA domains are found at residues 377 to 443 (SAST…TISS), 444 to 512 (GREV…TVST), and 513 to 577 (GPSL…EISN).

This sequence belongs to the protein kinase superfamily. Ser/Thr protein kinase family.

The enzyme catalyses L-seryl-[protein] + ATP = O-phospho-L-seryl-[protein] + ADP + H(+). The catalysed reaction is L-threonyl-[protein] + ATP = O-phospho-L-threonyl-[protein] + ADP + H(+). This Corynebacterium efficiens (strain DSM 44549 / YS-314 / AJ 12310 / JCM 11189 / NBRC 100395) protein is Probable serine/threonine-protein kinase CE0033.